A 407-amino-acid chain; its full sequence is Na(+)-translocating NADH-quinone reductase subunit F (407 aa).

The chain crosses the membrane as a helical span at residues 3-23 (ITLGIAMFTVIVLALAVIILF). The region spanning 32–126 (GDITIEINDD…SMKVELPEEV (95 aa)) is the 2Fe-2S ferredoxin-type domain. [2Fe-2S] cluster-binding residues include cysteine 69, cysteine 75, cysteine 78, and cysteine 110. Positions 129–269 (VKKWECTVIS…SGPFGEFFAK (141 aa)) constitute an FAD-binding FR-type domain. Positions 272-389 (DAEMVFVGGG…PIMNASVIKM (118 aa)) are catalytic.

The protein belongs to the NqrF family. Composed of six subunits; NqrA, NqrB, NqrC, NqrD, NqrE and NqrF. [2Fe-2S] cluster is required as a cofactor. It depends on FAD as a cofactor.

The protein resides in the cell inner membrane. The enzyme catalyses a ubiquinone + n Na(+)(in) + NADH + H(+) = a ubiquinol + n Na(+)(out) + NAD(+). In terms of biological role, NQR complex catalyzes the reduction of ubiquinone-1 to ubiquinol by two successive reactions, coupled with the transport of Na(+) ions from the cytoplasm to the periplasm. The first step is catalyzed by NqrF, which accepts electrons from NADH and reduces ubiquinone-1 to ubisemiquinone by a one-electron transfer pathway. This Pasteurella multocida (strain Pm70) protein is Na(+)-translocating NADH-quinone reductase subunit F.